The chain runs to 464 residues: 3-isopropylmalate dehydratase large subunit (464 aa).

3 residues coordinate [4Fe-4S] cluster: Cys-337, Cys-397, and Cys-400.

The protein belongs to the aconitase/IPM isomerase family. LeuC type 1 subfamily. As to quaternary structure, heterodimer of LeuC and LeuD. The cofactor is [4Fe-4S] cluster.

The catalysed reaction is (2R,3S)-3-isopropylmalate = (2S)-2-isopropylmalate. It participates in amino-acid biosynthesis; L-leucine biosynthesis; L-leucine from 3-methyl-2-oxobutanoate: step 2/4. Catalyzes the isomerization between 2-isopropylmalate and 3-isopropylmalate, via the formation of 2-isopropylmaleate. This chain is 3-isopropylmalate dehydratase large subunit, found in Bacillus thuringiensis (strain Al Hakam).